The sequence spans 400 residues: S-adenosylmethionine synthase (400 aa).

Position 17 (His17) interacts with ATP. Mg(2+) is bound at residue Asp19. Glu45 contacts K(+). Glu58 and Gln101 together coordinate L-methionine. The tract at residues 101–111 (QSADIAMGVDQ) is flexible loop. Residues 177–179 (DGK), 244–245 (RF), Asp253, 259–260 (RK), Ala276, and Lys280 contribute to the ATP site. Asp253 serves as a coordination point for L-methionine. Lys284 is an L-methionine binding site.

Belongs to the AdoMet synthase family. Homotetramer; dimer of dimers. It depends on Mg(2+) as a cofactor. The cofactor is K(+).

The protein localises to the cytoplasm. It catalyses the reaction L-methionine + ATP + H2O = S-adenosyl-L-methionine + phosphate + diphosphate. The protein operates within amino-acid biosynthesis; S-adenosyl-L-methionine biosynthesis; S-adenosyl-L-methionine from L-methionine: step 1/1. Functionally, catalyzes the formation of S-adenosylmethionine (AdoMet) from methionine and ATP. The overall synthetic reaction is composed of two sequential steps, AdoMet formation and the subsequent tripolyphosphate hydrolysis which occurs prior to release of AdoMet from the enzyme. The polypeptide is S-adenosylmethionine synthase (Bacillus subtilis (strain 168)).